The following is a 385-amino-acid chain: Chaperone protein DnaJ (385 aa).

The J domain maps to 5 to 70; sequence DYYEVLGVAK…QKRAAYDRFG (66 aa). The CR-type zinc-finger motif lies at 141–219; it reads GKTETIRIPT…CSGAGRVNRE (79 aa). 8 residues coordinate Zn(2+): Cys-154, Cys-157, Cys-171, Cys-174, Cys-193, Cys-196, Cys-207, and Cys-210. CXXCXGXG motif repeat units follow at residues 154–161, 171–178, 193–200, and 207–214; these read CETCSGTG, CSTCGGYG, CPNCHGRG, and CTACSGAG.

The protein belongs to the DnaJ family. In terms of assembly, homodimer. Zn(2+) serves as cofactor.

The protein localises to the cytoplasm. Participates actively in the response to hyperosmotic and heat shock by preventing the aggregation of stress-denatured proteins and by disaggregating proteins, also in an autonomous, DnaK-independent fashion. Unfolded proteins bind initially to DnaJ; upon interaction with the DnaJ-bound protein, DnaK hydrolyzes its bound ATP, resulting in the formation of a stable complex. GrpE releases ADP from DnaK; ATP binding to DnaK triggers the release of the substrate protein, thus completing the reaction cycle. Several rounds of ATP-dependent interactions between DnaJ, DnaK and GrpE are required for fully efficient folding. Also involved, together with DnaK and GrpE, in the DNA replication of plasmids through activation of initiation proteins. The protein is Chaperone protein DnaJ of Methylorubrum extorquens (strain PA1) (Methylobacterium extorquens).